The following is a 151-amino-acid chain: Acidic phospholipase A2 2 (151 aa).

A signal peptide spans 1-27; the sequence is MYPAHLLVLLAVCVSLLGAASIPARPL. Cystine bridges form between Cys38–Cys104, Cys54–Cys151, Cys56–Cys72, Cys71–Cys132, Cys78–Cys125, Cys88–Cys118, and Cys111–Cys123. Residues Tyr55, Gly57, and Gly59 each contribute to the Ca(2+) site. The active site involves His75. Asp76 serves as a coordination point for Ca(2+). Asp126 is a catalytic residue.

This sequence belongs to the phospholipase A2 family. Group I subfamily. D49 sub-subfamily. It depends on Ca(2+) as a cofactor. In terms of tissue distribution, expressed by the venom gland.

It localises to the secreted. It carries out the reaction a 1,2-diacyl-sn-glycero-3-phosphocholine + H2O = a 1-acyl-sn-glycero-3-phosphocholine + a fatty acid + H(+). Its function is as follows. PLA2 catalyzes the calcium-dependent hydrolysis of the 2-acyl groups in 3-sn-phosphoglycerides. The protein is Acidic phospholipase A2 2 of Tropidechis carinatus (Australian rough-scaled snake).